The sequence spans 147 residues: Large ribosomal subunit protein uL13 (147 aa).

Residues 127 to 147 (GPEHPHSAQQPKVLEIQGAAR) form a disordered region.

Belongs to the universal ribosomal protein uL13 family. In terms of assembly, part of the 50S ribosomal subunit.

This protein is one of the early assembly proteins of the 50S ribosomal subunit, although it is not seen to bind rRNA by itself. It is important during the early stages of 50S assembly. The chain is Large ribosomal subunit protein uL13 from Verminephrobacter eiseniae (strain EF01-2).